Here is a 183-residue protein sequence, read N- to C-terminus: Large ribosomal subunit protein uL5 (183 aa).

The protein belongs to the universal ribosomal protein uL5 family. As to quaternary structure, part of the 50S ribosomal subunit; part of the 5S rRNA/L5/L18/L25 subcomplex. Contacts the 5S rRNA and the P site tRNA. Forms a bridge to the 30S subunit in the 70S ribosome.

This is one of the proteins that bind and probably mediate the attachment of the 5S RNA into the large ribosomal subunit, where it forms part of the central protuberance. In the 70S ribosome it contacts protein S13 of the 30S subunit (bridge B1b), connecting the 2 subunits; this bridge is implicated in subunit movement. Contacts the P site tRNA; the 5S rRNA and some of its associated proteins might help stabilize positioning of ribosome-bound tRNAs. The sequence is that of Large ribosomal subunit protein uL5 from Pseudothermotoga lettingae (strain ATCC BAA-301 / DSM 14385 / NBRC 107922 / TMO) (Thermotoga lettingae).